The sequence spans 179 residues: Large ribosomal subunit protein uL15 (179 aa).

It belongs to the universal ribosomal protein uL15 family. As to quaternary structure, part of the 50S ribosomal subunit.

Binds to the 23S rRNA. This is Large ribosomal subunit protein uL15 from Archaeoglobus fulgidus (strain ATCC 49558 / DSM 4304 / JCM 9628 / NBRC 100126 / VC-16).